The following is a 554-amino-acid chain: ATP synthase subunit alpha (554 aa).

172-179 serves as a coordination point for ATP; that stretch reads GDRKTGKT. Residues 528–554 form a disordered region; sequence LDEEELEKESVKVKKPAPEKKAKKEQK. The segment covering 535–554 has biased composition (basic and acidic residues); the sequence is KESVKVKKPAPEKKAKKEQK.

Belongs to the ATPase alpha/beta chains family. As to quaternary structure, F-type ATPases have 2 components, CF(1) - the catalytic core - and CF(0) - the membrane proton channel. CF(1) has five subunits: alpha(3), beta(3), gamma(1), delta(1), epsilon(1). CF(0) has three main subunits: a(1), b(2) and c(9-12). The alpha and beta chains form an alternating ring which encloses part of the gamma chain. CF(1) is attached to CF(0) by a central stalk formed by the gamma and epsilon chains, while a peripheral stalk is formed by the delta and b chains.

It is found in the cell membrane. The enzyme catalyses ATP + H2O + 4 H(+)(in) = ADP + phosphate + 5 H(+)(out). In terms of biological role, produces ATP from ADP in the presence of a proton gradient across the membrane. The alpha chain is a regulatory subunit. This is ATP synthase subunit alpha from Mycolicibacterium paratuberculosis (strain ATCC BAA-968 / K-10) (Mycobacterium paratuberculosis).